A 481-amino-acid chain; its full sequence is Extracellular exo-alpha-(1-&gt;5)-L-arabinofuranosidase (481 aa).

The N-terminal stretch at 1–27 (MRRLTVRLFTAVLAALALLTMGTPAHA) is a signal peptide. The catalytic stretch occupies residues 37–336 (FTNPLAEKRA…KVYWNADGTP (300 aa)). Asp47 acts as the Proton acceptor in catalysis. Asn186 serves as a coordination point for substrate. Glu223 functions as the Proton donor in the catalytic mechanism. Residues His287, Arg321, 363-366 (HWDF), Asp379, 457-460 (HYEN), and Asp475 each bind substrate. Residues 349 to 479 (VRFSSYNYPD…ALDRQDATFY (131 aa)) are ABD.

This sequence belongs to the glycosyl hydrolase 43 family.

It is found in the secreted. The catalysed reaction is Hydrolysis of terminal non-reducing alpha-L-arabinofuranoside residues in alpha-L-arabinosides.. Its pathway is glycan metabolism; L-arabinan degradation. Its function is as follows. Involved in the degradation of arabinan and is a key enzyme in the complete degradation of the plant cell wall. Catalyzes only the cleavage of terminal alpha-(1-&gt;5) arabinofuranosyl bonds of arabinan present in the arabinofuranosyl polysaccharides or oligosaccharides. It cannot act on other arabinose-containing polysaccharides and arabinoxylo-oligosaccharides. The protein is Extracellular exo-alpha-(1-&gt;5)-L-arabinofuranosidase of Streptomyces avermitilis (strain ATCC 31267 / DSM 46492 / JCM 5070 / NBRC 14893 / NCIMB 12804 / NRRL 8165 / MA-4680).